Here is a 65-residue protein sequence, read N- to C-terminus: Small ribosomal subunit protein bS21 (65 aa).

The disordered stretch occupies residues 39–65; that stretch reads EKPSIKRKKKAIAARKRALKKQRKMMD. Over residues 43–65 the composition is skewed to basic residues; that stretch reads IKRKKKAIAARKRALKKQRKMMD.

It belongs to the bacterial ribosomal protein bS21 family.

The polypeptide is Small ribosomal subunit protein bS21 (Pelobacter propionicus (strain DSM 2379 / NBRC 103807 / OttBd1)).